A 282-amino-acid chain; its full sequence is ADP-ribosyl cyclase/cyclic ADP-ribose hydrolase (282 aa).

Residues 1-24 (MSPVAIVACVCLAVTLTRISPSEA) form the signal peptide. Disulfide bonds link cysteine 39–cysteine 58, cysteine 75–cysteine 155, cysteine 136–cysteine 149, cysteine 230–cysteine 251, and cysteine 263–cysteine 272.

It belongs to the ADP-ribosyl cyclase family. Ovotestis.

It is found in the cytoplasmic vesicle. It catalyses the reaction NAD(+) = cyclic ADP-beta-D-ribose + nicotinamide + H(+). It carries out the reaction NAD(+) + H2O = ADP-D-ribose + nicotinamide + H(+). The enzyme catalyses nicotinate + NADP(+) = nicotinate-adenine dinucleotide phosphate + nicotinamide. Its activity is regulated as follows. Activity is presumably regulated by its sequestration in vesicles before egg fertilization. After fertilization and upon NADase release, it could then be regulated via its potential phosphorylation sites. Its function is as follows. Synthesizes cyclic ADP-ribose (cADPR), a second messenger for calcium mobilization from endoplasmic reticulum. Might make the Ca(2+) mobilizer nicotinate-adenine dinucleotide phosphate. Does not have cADPR hydrolase activity. This chain is ADP-ribosyl cyclase/cyclic ADP-ribose hydrolase, found in Aplysia kurodai (Kuroda's sea hare).